The chain runs to 196 residues: Carnitine operon protein CaiE (196 aa).

Residues 173–196 (TQPLRQMEENRPRLQGTTDVTPKR) form a disordered region. Residues 187–196 (QGTTDVTPKR) show a composition bias toward polar residues.

The protein belongs to the transferase hexapeptide repeat family.

Its pathway is amine and polyamine metabolism; carnitine metabolism. Overproduction of CaiE stimulates the activity of CaiB and CaiD. This is Carnitine operon protein CaiE from Shigella dysenteriae serotype 1 (strain Sd197).